The chain runs to 89 residues: Dynein light chain 1, cytoplasmic (89 aa).

This sequence belongs to the dynein light chain family. Interacts with spn-F. Forms ternary complexes with spn-F and IKKepsilon. As to expression, ubiquitous.

Its subcellular location is the cytoplasm. It is found in the cytoskeleton. In terms of biological role, acts as a non-catalytic accessory component of a dynein complex. The sequence is that of Dynein light chain 1, cytoplasmic (ctp) from Drosophila melanogaster (Fruit fly).